A 263-amino-acid polypeptide reads, in one-letter code: Inactive adenylate kinase (263 aa).

It belongs to the adenylate kinase family.

Its subcellular location is the cytoplasm. Lacks adenylate kinase activity. This Plasmodium falciparum (isolate 3D7) protein is Inactive adenylate kinase.